Consider the following 480-residue polypeptide: ATP-dependent rRNA helicase RRP3 (480 aa).

Composition is skewed to basic and acidic residues over residues 1–17 (MAKA…KEES) and 33–46 (DTTK…EPKK). Residues 1–63 (MAKATEKRVK…VEVDESEEQT (63 aa)) form a disordered region. The short motif at 64-92 (KTFKDLGVIDSICETCEELKFTKPTPIQA) is the Q motif element. The Helicase ATP-binding domain occupies 95–266 (IPYALEGRDI…RASLVDPVRV (172 aa)). 108–115 (AQTGSGKT) lines the ATP pocket. A DEAD box motif is present at residues 214–217 (DEAD). Positions 277-437 (NLLQYMVFCP…SYPLESEAVM (161 aa)) constitute a Helicase C-terminal domain. Residues 450 to 480 (AIQEMKGEDGTKKRSKFDKKRRRDEMDIGEQ) are disordered. Basic residues predominate over residues 462-471 (KRSKFDKKRR).

Belongs to the DEAD box helicase family. DDX47/RRP3 subfamily. As to quaternary structure, interacts with the SSU processome.

It is found in the nucleus. The catalysed reaction is ATP + H2O = ADP + phosphate + H(+). Its function is as follows. ATP-dependent rRNA helicase required for pre-ribosomal RNA processing. Involved in the maturation of the 35S-pre-rRNA and to its cleavage to mature 18S rRNA. The sequence is that of ATP-dependent rRNA helicase RRP3 from Yarrowia lipolytica (strain CLIB 122 / E 150) (Yeast).